Here is a 300-residue protein sequence, read N- to C-terminus: Cation-efflux pump FieF (300 aa).

The helical transmembrane segment at 24-44 threads the bilayer; it reads LLIKIFAWWYTGSVSILAALV. 2 residues coordinate Zn(2+): Asp45 and Asp49. A run of 2 helical transmembrane segments spans residues 82–102 and 114–134; these read AALA…LTSI and PGVG…LVTF. The Zn(2+) site is built by His153 and Asp157. The next 2 helical transmembrane spans lie at 156–176 and 178–198; these read SDVM…YGWH and ADAL…LRMG.

This sequence belongs to the cation diffusion facilitator (CDF) transporter (TC 2.A.4) family. FieF subfamily. Homodimer.

It is found in the cell inner membrane. It carries out the reaction Zn(2+)(in) + H(+)(out) = Zn(2+)(out) + H(+)(in). The enzyme catalyses Cd(2+)(in) + H(+)(out) = Cd(2+)(out) + H(+)(in). It catalyses the reaction Fe(2+)(in) + H(+)(out) = Fe(2+)(out) + H(+)(in). In terms of biological role, divalent metal cation transporter which exports Zn(2+), Cd(2+) and possibly Fe(2+). May be involved in zinc and iron detoxification by efflux. This chain is Cation-efflux pump FieF, found in Salmonella choleraesuis (strain SC-B67).